The sequence spans 66 residues: Large ribosomal subunit protein bL35 (66 aa).

A compositionally biased stretch (basic residues) spans 1 to 26 (MPKMKTHRGAAKRFKKTGTGKLKRGH). The disordered stretch occupies residues 1 to 48 (MPKMKTHRGAAKRFKKTGTGKLKRGHAYTSHLFANKTQKQKRKLRKAT).

This sequence belongs to the bacterial ribosomal protein bL35 family.

The chain is Large ribosomal subunit protein bL35 from Geobacillus sp. (strain WCH70).